Consider the following 153-residue polypeptide: Large ribosomal subunit protein uL15 (153 aa).

Residues 1 to 42 (MRLNTIKPGMGSTKPRRRVGRGIGSGLGKTCGRGHKGQKSRA) form a disordered region. A compositionally biased stretch (gly residues) spans 21–31 (RGIGSGLGKTC).

The protein belongs to the universal ribosomal protein uL15 family. As to quaternary structure, part of the 50S ribosomal subunit.

In terms of biological role, binds to the 23S rRNA. The sequence is that of Large ribosomal subunit protein uL15 from Nitrosomonas eutropha (strain DSM 101675 / C91 / Nm57).